The chain runs to 116 residues: Large ribosomal subunit protein bL19 (116 aa).

The protein belongs to the bacterial ribosomal protein bL19 family.

This protein is located at the 30S-50S ribosomal subunit interface and may play a role in the structure and function of the aminoacyl-tRNA binding site. The sequence is that of Large ribosomal subunit protein bL19 from Chloroflexus aggregans (strain MD-66 / DSM 9485).